Consider the following 568-residue polypeptide: C6 finger domain transcription factor BOA13 (568 aa).

The zn(2)-C6 fungal-type DNA-binding region spans 14–41; sequence CNECHASKVRCSGERTGCRRCVYNQQKC. Disordered stretches follow at residues 92-114, 207-278, and 467-490; these read EANGNDLNSKPNDVPVESSEGIT, ATSS…HHNH, and RSRSLSTPSPRNTPSTSNSPFSNP. A compositionally biased stretch (basic and acidic residues) spans 242-259; sequence HSDLSEKQAQHAQNDLRW. A compositionally biased stretch (polar residues) spans 260–274; that stretch reads RSQSQSYKRPTISTQ. Over residues 470–490 the composition is skewed to low complexity; the sequence is SLSTPSPRNTPSTSNSPFSNP.

It is found in the nucleus. Functionally, transcription factor that probably regulates the gene clusters that mediates the biosynthesis of botcinin acid and its botcinin derivatives, acetate-derived polyketides that contribute to virulence when combined with the sesquiterpene botrydial. Botcinin acid and its derivatives have been shown to induce chlorosis and necrosis during host plant infection, but also have antifungal activities. This Botryotinia fuckeliana (strain B05.10) (Noble rot fungus) protein is C6 finger domain transcription factor BOA13.